The following is a 307-amino-acid chain: Epimerase family protein ML0860 (307 aa).

Belongs to the NAD(P)-dependent epimerase/dehydratase family. SDR39U1 subfamily.

The sequence is that of Epimerase family protein ML0860 from Mycobacterium leprae (strain TN).